A 754-amino-acid chain; its full sequence is 5-methyltetrahydropteroyltriglutamate--homocysteine methyltransferase (754 aa).

5-methyltetrahydropteroyltri-L-glutamate contacts are provided by residues 17 to 20 (RELK) and Lys117. Residues 431–433 (IGS) and Glu484 contribute to the L-homocysteine site. L-methionine contacts are provided by residues 431–433 (IGS) and Glu484. 5-methyltetrahydropteroyltri-L-glutamate is bound by residues 515 to 516 (RC) and Trp561. Asp599 serves as a coordination point for L-homocysteine. An L-methionine-binding site is contributed by Asp599. Glu605 provides a ligand contact to 5-methyltetrahydropteroyltri-L-glutamate. The Zn(2+) site is built by His641, Cys643, and Glu665. Residue His694 is the Proton donor of the active site. Cys726 is a Zn(2+) binding site.

The protein belongs to the vitamin-B12 independent methionine synthase family. The cofactor is Zn(2+).

It carries out the reaction 5-methyltetrahydropteroyltri-L-glutamate + L-homocysteine = tetrahydropteroyltri-L-glutamate + L-methionine. It functions in the pathway amino-acid biosynthesis; L-methionine biosynthesis via de novo pathway; L-methionine from L-homocysteine (MetE route): step 1/1. Its function is as follows. Catalyzes the transfer of a methyl group from 5-methyltetrahydrofolate to homocysteine resulting in methionine formation. The protein is 5-methyltetrahydropteroyltriglutamate--homocysteine methyltransferase of Salmonella newport (strain SL254).